We begin with the raw amino-acid sequence, 316 residues long: Retinol dehydrogenase 12 (316 aa).

46–52 (GANTGIG) serves as a coordination point for NADP(+). Residue Ser-175 coordinates substrate. Tyr-200 functions as the Proton acceptor in the catalytic mechanism.

The protein belongs to the short-chain dehydrogenases/reductases (SDR) family. As to expression, widely expressed, mostly in retina, kidney, brain, skeletal muscle, pancreas and stomach.

The protein resides in the endoplasmic reticulum membrane. The enzyme catalyses all-trans-retinol + NADP(+) = all-trans-retinal + NADPH + H(+). It catalyses the reaction 11-cis-retinol + NADP(+) = 11-cis-retinal + NADPH + H(+). The catalysed reaction is 9-cis-retinol + NADP(+) = 9-cis-retinal + NADPH + H(+). It carries out the reaction a 4-hydroxynonen-1-ol + NADP(+) = a 4-hydroxynonenal + NADPH + H(+). The enzyme catalyses (E)-non-2-en-1-ol + NADP(+) = (E)-non-2-enal + NADPH + H(+). It catalyses the reaction (Z)-non-6-en-1-ol + NADP(+) = (Z)-non-6-enal + NADPH + H(+). The catalysed reaction is nonan-1-ol + NADP(+) = nonanal + NADPH + H(+). It functions in the pathway cofactor metabolism; retinol metabolism. In terms of biological role, retinoids dehydrogenase/reductase with a clear preference for NADP. Displays high activity towards 9-cis, 11-cis and all-trans-retinal. Shows very weak activity towards 13-cis-retinol. Also exhibits activity, albeit with lower affinity than for retinaldehydes, towards lipid peroxidation products (C9 aldehydes) such as 4-hydroxynonenal and trans-2-nonenal. May play an important function in photoreceptor cells to detoxify 4-hydroxynonenal and potentially other toxic aldehyde products resulting from lipid peroxidation. Has no dehydrogenase activity towards steroids. In Homo sapiens (Human), this protein is Retinol dehydrogenase 12 (RDH12).